The sequence spans 257 residues: NAD-capped RNA hydrolase NudC (257 aa).

K25 and R69 together coordinate substrate. Residues C98 and C101 each contribute to the Zn(2+) site. Residue E111 coordinates substrate. The Zn(2+) site is built by C116 and C119. Y124 lines the substrate pocket. The Nudix hydrolase domain maps to 125 to 248; the sequence is PQIAPCIIVA…TVARRLIEDT (124 aa). Residues A158, E174, and E178 each coordinate a divalent metal cation. Positions 159–180 match the Nudix box motif; that stretch reads GFVEVGETLEQAVAREVMEESG. 192–199 contributes to the substrate binding site; that stretch reads QPWPFPQS. Residue E219 participates in a divalent metal cation binding. A241 lines the substrate pocket.

The protein belongs to the Nudix hydrolase family. NudC subfamily. Homodimer. The cofactor is Mg(2+). It depends on Mn(2+) as a cofactor. Zn(2+) serves as cofactor.

It catalyses the reaction a 5'-end NAD(+)-phospho-ribonucleoside in mRNA + H2O = a 5'-end phospho-adenosine-phospho-ribonucleoside in mRNA + beta-nicotinamide D-ribonucleotide + 2 H(+). The enzyme catalyses NAD(+) + H2O = beta-nicotinamide D-ribonucleotide + AMP + 2 H(+). It carries out the reaction NADH + H2O = reduced beta-nicotinamide D-ribonucleotide + AMP + 2 H(+). Its function is as follows. mRNA decapping enzyme that specifically removes the nicotinamide adenine dinucleotide (NAD) cap from a subset of mRNAs by hydrolyzing the diphosphate linkage to produce nicotinamide mononucleotide (NMN) and 5' monophosphate mRNA. The NAD-cap is present at the 5'-end of some mRNAs and stabilizes RNA against 5'-processing. Has preference for mRNAs with a 5'-end purine. Catalyzes the hydrolysis of a broad range of dinucleotide pyrophosphates. The polypeptide is NAD-capped RNA hydrolase NudC (Escherichia coli O45:K1 (strain S88 / ExPEC)).